We begin with the raw amino-acid sequence, 153 residues long: 4'-phosphopantetheinyl transferase B, mitochondrial (153 aa).

It belongs to the P-Pant transferase superfamily.

It localises to the mitochondrion. It carries out the reaction apo-[ACP] + CoA = holo-[ACP] + adenosine 3',5'-bisphosphate + H(+). Acyl-carrier-protein synthase transfers the 4'-phosphopantetheine moiety from coenzyme A to a Ser of an acyl-carrier-protein. The 4'-phosphopantetheine (4'-PPT) portion of CoA provides the essential prosthetic group for a number of carrier proteins and multi-domain enzymes, priming them for the acceptance of acyl building blocks in fatty acid synthesis and many aspects of secondary metabolism mediated by polyketide synthases (PKSs) and non-ribosomal peptide synthetases (NRPSs). PptB is specific for the mitochondrial acyl carrier protein acpA. The protein is 4'-phosphopantetheinyl transferase B, mitochondrial of Aspergillus fumigatus (strain ATCC MYA-4609 / CBS 101355 / FGSC A1100 / Af293) (Neosartorya fumigata).